The following is an 889-amino-acid chain: Mixed-linked glucan synthase 2 (889 aa).

Positions 34–53 are disordered; the sequence is AGADGQNGRRSPVAKRVNDG. Transmembrane regions (helical) follow at residues 93–113 and 123–143; these read ILHP…AFFA and GVWL…SWVL. Aspartate 213 is a catalytic residue. Residues 265-293 are a coiled coil; it reads ELMSDHRRVRREYEEFKVRIDSLSSTIRQ. The substrate site is built by aspartate 411 and aspartate 413. Residue aspartate 579 is part of the active site. 6 helical membrane passes run 655–675, 685–705, 723–743, 777–797, 811–831, and 842–862; these read TYPI…MWLI, FGEY…IGMF, FYMI…ALKL, LLIP…VAVG, LAVL…PFAL, and AVLF…YVAF.

Belongs to the glycosyltransferase 2 family. Plant cellulose synthase-like F subfamily.

The protein resides in the golgi apparatus membrane. Its function is as follows. Catalyzes both beta-1,3 and beta-1,4 glycosidic linkage on beta-D-glucan. Essential for (1,3;1,4)-beta-D-glucans synthesis in grasses and cereals (Poaceae). The mixed-linked glucans (which are not present in walls of dicotyledons or most other monocotyledonous plants) are particularly important constituents of the walls of the starchy endosperm and aleurone cells of cereal grains such as oats, wheat, rice and barley. They can account for up to 70% by weight of the wall. The protein is Mixed-linked glucan synthase 2 (CSLF2) of Oryza sativa subsp. japonica (Rice).